The primary structure comprises 408 residues: LL-diaminopimelate aminotransferase (408 aa).

Substrate contacts are provided by Tyr15 and Gly42. Pyridoxal 5'-phosphate contacts are provided by residues Tyr72, 108–109 (SK), Tyr132, Asn187, Tyr218, and 246–248 (SFS). The substrate site is built by Lys109, Tyr132, and Asn187. Lys249 bears the N6-(pyridoxal phosphate)lysine mark. Pyridoxal 5'-phosphate contacts are provided by Arg257 and Asn292. Residues Asn292 and Arg388 each coordinate substrate.

The protein belongs to the class-I pyridoxal-phosphate-dependent aminotransferase family. LL-diaminopimelate aminotransferase subfamily. As to quaternary structure, homodimer. The cofactor is pyridoxal 5'-phosphate.

It carries out the reaction (2S,6S)-2,6-diaminopimelate + 2-oxoglutarate = (S)-2,3,4,5-tetrahydrodipicolinate + L-glutamate + H2O + H(+). It participates in amino-acid biosynthesis; L-lysine biosynthesis via DAP pathway; LL-2,6-diaminopimelate from (S)-tetrahydrodipicolinate (aminotransferase route): step 1/1. Involved in the synthesis of meso-diaminopimelate (m-DAP or DL-DAP), required for both lysine and peptidoglycan biosynthesis. Catalyzes the direct conversion of tetrahydrodipicolinate to LL-diaminopimelate. This is LL-diaminopimelate aminotransferase from Prochlorococcus marinus (strain MIT 9211).